The sequence spans 101 residues: Aspartyl/glutamyl-tRNA(Asn/Gln) amidotransferase subunit C (101 aa).

This sequence belongs to the GatC family. As to quaternary structure, heterotrimer of A, B and C subunits.

It catalyses the reaction L-glutamyl-tRNA(Gln) + L-glutamine + ATP + H2O = L-glutaminyl-tRNA(Gln) + L-glutamate + ADP + phosphate + H(+). The enzyme catalyses L-aspartyl-tRNA(Asn) + L-glutamine + ATP + H2O = L-asparaginyl-tRNA(Asn) + L-glutamate + ADP + phosphate + 2 H(+). Functionally, allows the formation of correctly charged Asn-tRNA(Asn) or Gln-tRNA(Gln) through the transamidation of misacylated Asp-tRNA(Asn) or Glu-tRNA(Gln) in organisms which lack either or both of asparaginyl-tRNA or glutaminyl-tRNA synthetases. The reaction takes place in the presence of glutamine and ATP through an activated phospho-Asp-tRNA(Asn) or phospho-Glu-tRNA(Gln). This chain is Aspartyl/glutamyl-tRNA(Asn/Gln) amidotransferase subunit C, found in Lactobacillus delbrueckii subsp. bulgaricus (strain ATCC 11842 / DSM 20081 / BCRC 10696 / JCM 1002 / NBRC 13953 / NCIMB 11778 / NCTC 12712 / WDCM 00102 / Lb 14).